A 159-amino-acid chain; its full sequence is Phosphopantetheine adenylyltransferase (159 aa).

Thr-9 lines the substrate pocket. Residues 9–10 (TF) and His-17 each bind ATP. Substrate is bound by residues Lys-41, Leu-73, and Arg-87. ATP is bound by residues 88 to 90 (GLR), Glu-98, and 123 to 129 (YAFLSST).

This sequence belongs to the bacterial CoaD family. Homohexamer. It depends on Mg(2+) as a cofactor.

Its subcellular location is the cytoplasm. It carries out the reaction (R)-4'-phosphopantetheine + ATP + H(+) = 3'-dephospho-CoA + diphosphate. Its pathway is cofactor biosynthesis; coenzyme A biosynthesis; CoA from (R)-pantothenate: step 4/5. Reversibly transfers an adenylyl group from ATP to 4'-phosphopantetheine, yielding dephospho-CoA (dPCoA) and pyrophosphate. The chain is Phosphopantetheine adenylyltransferase from Vibrio campbellii (strain ATCC BAA-1116).